The following is a 605-amino-acid chain: UvrABC system protein C (605 aa).

Residues 13–92 form the GIY-YIG domain; it reads TSPGVYLMKD…IKKHHPKYNV (80 aa). One can recognise a UVR domain in the interval 205–240; the sequence is SEIIQDLEKSIEKASQEQKFEQAGIYYRTLKLIQQA.

The protein belongs to the UvrC family. Interacts with UvrB in an incision complex.

The protein localises to the cytoplasm. The UvrABC repair system catalyzes the recognition and processing of DNA lesions. UvrC both incises the 5' and 3' sides of the lesion. The N-terminal half is responsible for the 3' incision and the C-terminal half is responsible for the 5' incision. This Chlamydia caviae (strain ATCC VR-813 / DSM 19441 / 03DC25 / GPIC) (Chlamydophila caviae) protein is UvrABC system protein C.